A 363-amino-acid chain; its full sequence is Flagellar P-ring protein (363 aa).

Positions 1–20 are cleaved as a signal peptide; it reads MKKLTLVLFGMLFLASSAHA.

This sequence belongs to the FlgI family. As to quaternary structure, the basal body constitutes a major portion of the flagellar organelle and consists of four rings (L,P,S, and M) mounted on a central rod.

It localises to the periplasm. The protein localises to the bacterial flagellum basal body. In terms of biological role, assembles around the rod to form the L-ring and probably protects the motor/basal body from shearing forces during rotation. In Vibrio atlanticus (strain LGP32) (Vibrio splendidus (strain Mel32)), this protein is Flagellar P-ring protein.